We begin with the raw amino-acid sequence, 421 residues long: Nacrein-like protein M (421 aa).

Asn-27 is a glycosylation site (N-linked (GlcNAc...) asparagine). The 388-residue stretch at 33 to 420 folds into the Alpha-carbonic anhydrase domain; the sequence is AGFSYDRSIC…KNKVTVYKSF (388 aa). Residues His-132, His-134, and His-157 each coordinate Zn(2+). Over residues 197-206 the composition is skewed to acidic residues; that stretch reads DGFGDEPDDE. The interval 197–303 is disordered; that stretch reads DGFGDEPDDE…GENGHKHGCR (107 aa). Residues 207 to 219 show a composition bias toward basic and acidic residues; it reads ECKRILKGHHPDN. Over residues 220–295 the composition is skewed to low complexity; sequence NENGNGDNGN…NNGDNGNNGE (76 aa). 24 consecutive repeat copies span residues 225-227, 228-230, 231-233, 234-236, 237-239, 240-242, 243-245, 246-248, 249-251, 252-254, 255-257, 258-260, 261-263, 264-266, 267-269, 270-272, 273-275, 276-278, 279-281, 282-284, 285-287, 288-290, 291-292, and 294-296. The tract at residues 225 to 296 is 24 X 3 AA approximate tandem repeats of G-X-N; it reads GDNGNNGYNG…NGDNGNNGEN (72 aa). A substrate-binding site is contributed by 361-362; it reads TT.

It belongs to the alpha-carbonic anhydrase family. In terms of assembly, homooligomer; disulfide-linked. May also be disulfide-linked to insoluble organic matrix. Zn(2+) is required as a cofactor. As to expression, expressed in the mantle.

It localises to the secreted. The protein localises to the extracellular space. Its subcellular location is the extracellular matrix. The catalysed reaction is hydrogencarbonate + H(+) = CO2 + H2O. In terms of biological role, acts as a negative regulator for calcification in the shells of mollusks. May function both as a calcium concentrator and as a carbonic anhydrase required for production of carbonate ions, which are assembled to CaCO(3) at mineralization sites. Is important for shell formation in both the calcitic prismatic layer and the aragonitic nacreous layerr. Shows inhibitory activity of crystal formation when present in free state but, when attached to the insoluble matrix, may regulate the form and size of aragonite crystal. The protein is Nacrein-like protein M of Pinctada maxima (Silver-lipped pearl oyster).